The primary structure comprises 1010 residues: Pre-mRNA-splicing factor cwc22 (1010 aa).

A compositionally biased stretch (polar residues) spans 1–10 (MASADMSPSR). Positions 1–166 (MASADMSPSR…RTPTPPPVAV (166 aa)) are disordered. The span at 18–28 (RSPSPRTQSPS) shows a compositional bias: low complexity. 2 stretches are compositionally biased toward basic and acidic residues: residues 29–39 (PRDEDGSRSPG) and 65–78 (PRRD…DQPH). Residues 84 to 109 (RSPTPRSQSPSRRSVRSPSPRQGSPA) are compositionally biased toward low complexity. The segment covering 142–158 (RHRDAGGDYRPVRKERT) has biased composition (basic and acidic residues). The MIF4G domain occupies 222–405 (KKSVNGLVNK…EVLFQVRKDK (184 aa)). A disordered region spans residues 466 to 498 (GEASDDDEDDDDDDESESGSESEDEEQKALEIK). Residues 468 to 491 (ASDDDEDDDDDDESESGSESEDEE) are compositionally biased toward acidic residues. An MI domain is found at 507–623 (NLRRTIYLSI…GWHVFSVIHL (117 aa)). Positions 708 to 1010 (LPAPPADSDS…SPVAKRGRVD (303 aa)) are disordered. Residues 718-732 (ESVSSYSSYSSYSSR) are compositionally biased toward low complexity. Over residues 753-775 (PPRRGRGRSYSRTPSRSRSRSRS) the composition is skewed to basic residues. Over residues 776 to 787 (YSRSVSKSVSRS) the composition is skewed to low complexity. Composition is skewed to basic residues over residues 834–846 (RRGR…RSRS) and 899–910 (RLRRGSYSRSRS). Positions 911-935 (RSPIPIRGNGPAGRDTGRAGPAPAR) are enriched in low complexity. Residues 936-948 (GGRRNRSYSRSRT) are compositionally biased toward basic residues. Residues 961–973 (SRRVVSRSPSPVV) show a composition bias toward low complexity. Over residues 976–1010 (NKRRRSYSSSRSRSRSSSRSRYRSRSPVAKRGRVD) the composition is skewed to basic residues.

This sequence belongs to the CWC22 family. As to quaternary structure, associated with the spliceosome.

It localises to the cytoplasm. The protein resides in the nucleus. Its function is as follows. Involved in pre-mRNA splicing. This chain is Pre-mRNA-splicing factor cwc22 (msp-1), found in Neurospora crassa (strain ATCC 24698 / 74-OR23-1A / CBS 708.71 / DSM 1257 / FGSC 987).